We begin with the raw amino-acid sequence, 298 residues long: 4-hydroxybenzoate octaprenyltransferase (298 aa).

7 consecutive transmembrane segments (helical) span residues 30-50 (IGTW…AEGI), 54-74 (GTLL…CVVN), 105-125 (VLFA…NLPT), 148-168 (FPQV…FMAI), 218-238 (DRLM…WVGL), 240-260 (LALG…FVFQ), and 275-295 (AFLN…LSLW).

This sequence belongs to the UbiA prenyltransferase family. Requires Mg(2+) as cofactor.

It is found in the cell inner membrane. The catalysed reaction is all-trans-octaprenyl diphosphate + 4-hydroxybenzoate = 4-hydroxy-3-(all-trans-octaprenyl)benzoate + diphosphate. It functions in the pathway cofactor biosynthesis; ubiquinone biosynthesis. Catalyzes the prenylation of para-hydroxybenzoate (PHB) with an all-trans polyprenyl group. Mediates the second step in the final reaction sequence of ubiquinone-8 (UQ-8) biosynthesis, which is the condensation of the polyisoprenoid side chain with PHB, generating the first membrane-bound Q intermediate 3-octaprenyl-4-hydroxybenzoate. This Chromohalobacter salexigens (strain ATCC BAA-138 / DSM 3043 / CIP 106854 / NCIMB 13768 / 1H11) protein is 4-hydroxybenzoate octaprenyltransferase.